The sequence spans 212 residues: MNDAALAPDVSAALERGLQAQSLDTAFAAPLLRYLALLVRWNKTYNLTAVRDPRAMVTRHLLDSLAMQPYIASGMLADLGTGPGLPGIPLAITRPQLQVTLVESNGKKARFMREALRHLELRNARVAESRAEALDEPTAYDHLTARALDTLAGIIAVGGHLLRPGGSLLAMKGIYPHEEIAALPEGWTMSEVHQLQVPGLDGERHLVVVRKA.

S-adenosyl-L-methionine contacts are provided by residues glycine 80, leucine 85, 131–132 (AE), and arginine 146.

Belongs to the methyltransferase superfamily. RNA methyltransferase RsmG family.

The protein resides in the cytoplasm. The enzyme catalyses guanosine(527) in 16S rRNA + S-adenosyl-L-methionine = N(7)-methylguanosine(527) in 16S rRNA + S-adenosyl-L-homocysteine. Functionally, specifically methylates the N7 position of guanine in position 527 of 16S rRNA. The polypeptide is Ribosomal RNA small subunit methyltransferase G (Xanthomonas oryzae pv. oryzae (strain KACC10331 / KXO85)).